A 142-amino-acid polypeptide reads, in one-letter code: FAD synthase (142 aa).

ATP is bound by residues 9-10 (VF), 14-17 (HLGH), D93, and Y120.

The protein belongs to the archaeal FAD synthase family. In terms of assembly, homodimer. The cofactor is a divalent metal cation.

It catalyses the reaction FMN + ATP + H(+) = FAD + diphosphate. Its pathway is cofactor biosynthesis; FAD biosynthesis; FAD from FMN: step 1/1. Catalyzes the transfer of the AMP portion of ATP to flavin mononucleotide (FMN) to produce flavin adenine dinucleotide (FAD) coenzyme. This is FAD synthase from Thermoplasma acidophilum (strain ATCC 25905 / DSM 1728 / JCM 9062 / NBRC 15155 / AMRC-C165).